We begin with the raw amino-acid sequence, 49 residues long: Protein YlcJ (49 aa).

An N-terminal signal peptide occupies residues 1–21 (MSLVLCFLLMSLFFMYSFVLS).

The chain is Protein YlcJ from Escherichia coli (strain K12).